The chain runs to 658 residues: Glycogen debranching enzyme (658 aa).

The active-site Nucleophile is the D336. Catalysis depends on E371, which acts as the Proton donor. The segment at E459–G484 is disordered.

It belongs to the glycosyl hydrolase 13 family.

The catalysed reaction is Hydrolysis of (1-&gt;6)-alpha-D-glucosidic linkages to branches with degrees of polymerization of three or four glucose residues in limit dextrin.. It participates in glycan degradation; glycogen degradation. Functionally, removes maltotriose and maltotetraose chains that are attached by 1,6-alpha-linkage to the limit dextrin main chain, generating a debranched limit dextrin. The polypeptide is Glycogen debranching enzyme (Salmonella paratyphi B (strain ATCC BAA-1250 / SPB7)).